We begin with the raw amino-acid sequence, 428 residues long: 3-phosphoshikimate 1-carboxyvinyltransferase (428 aa).

Residues Lys-20, Ser-21, and Arg-25 each coordinate 3-phosphoshikimate. Lys-20 serves as a coordination point for phosphoenolpyruvate. Residues Gly-92 and Arg-120 each contribute to the phosphoenolpyruvate site. 4 residues coordinate 3-phosphoshikimate: Ser-166, Gln-168, Asp-314, and Lys-341. Gln-168 contributes to the phosphoenolpyruvate binding site. The active-site Proton acceptor is the Asp-314. Residues Arg-345 and Arg-387 each contribute to the phosphoenolpyruvate site.

It belongs to the EPSP synthase family. In terms of assembly, monomer.

The protein localises to the cytoplasm. The enzyme catalyses 3-phosphoshikimate + phosphoenolpyruvate = 5-O-(1-carboxyvinyl)-3-phosphoshikimate + phosphate. It functions in the pathway metabolic intermediate biosynthesis; chorismate biosynthesis; chorismate from D-erythrose 4-phosphate and phosphoenolpyruvate: step 6/7. Functionally, catalyzes the transfer of the enolpyruvyl moiety of phosphoenolpyruvate (PEP) to the 5-hydroxyl of shikimate-3-phosphate (S3P) to produce enolpyruvyl shikimate-3-phosphate and inorganic phosphate. The polypeptide is 3-phosphoshikimate 1-carboxyvinyltransferase (Listeria monocytogenes serotype 4b (strain CLIP80459)).